The sequence spans 217 residues: tRNA (guanine-N(7)-)-methyltransferase (217 aa).

S-adenosyl-L-methionine-binding residues include E48, E73, N100, and D123. Residue D123 is part of the active site. K127 and D159 together coordinate substrate.

It belongs to the class I-like SAM-binding methyltransferase superfamily. TrmB family.

It catalyses the reaction guanosine(46) in tRNA + S-adenosyl-L-methionine = N(7)-methylguanosine(46) in tRNA + S-adenosyl-L-homocysteine. It participates in tRNA modification; N(7)-methylguanine-tRNA biosynthesis. Functionally, catalyzes the formation of N(7)-methylguanine at position 46 (m7G46) in tRNA. In Leptospira interrogans serogroup Icterohaemorrhagiae serovar Lai (strain 56601), this protein is tRNA (guanine-N(7)-)-methyltransferase.